The sequence spans 3010 residues: Probable polyketide synthase 2 (3010 aa).

The region spanning 9-432 (SRDVAVIGIG…GSNACLLLSE (424 aa)) is the Ketosynthase family 3 (KS3) domain. Active-site for beta-ketoacyl synthase activity residues include Cys174, His313, and His353. Residues 629–662 (GINPSINVGHSFGEISSACCSGMLDLETACFIVY) are acyl/malonyl transferase. Catalysis depends on Ser639, which acts as the For acyl/malonyl transferase activity. The segment at 944–1063 (ATQLGYRNDV…ARFSVLKHNS (120 aa)) is N-terminal hotdog fold. A PKS/mFAS DH domain is found at 944-1235 (ATQLGYRNDV…YSSISTDIKN (292 aa)). His976 serves as the catalytic Proton acceptor; for dehydratase activity. Residues 1080–1235 (NWTTIKRKEF…YSSISTDIKN (156 aa)) form a C-terminal hotdog fold region. Residue Asp1146 is the Proton donor; for dehydratase activity of the active site. The region spanning 2482-2559 (DNELSIRDDI…QLIQAVIQAV (78 aa)) is the Carrier domain. Ser2519 carries the post-translational modification O-(pantetheine 4'-phosphoryl)serine.

The cofactor is pantetheine 4'-phosphate.

Its function is as follows. Probable polyketide synthase. The polypeptide is Probable polyketide synthase 2 (pks2) (Dictyostelium discoideum (Social amoeba)).